A 700-amino-acid chain; its full sequence is non-specific serine/threonine protein kinase Cdc7 (700 aa).

Residues 127–644 (FDVHSRIGNG…AEEALKHPFF (518 aa)) form the Protein kinase domain. Residues 133–141 (IGNGTFSTV) and Lys-163 each bind ATP. The active-site Proton acceptor is Asp-250.

This sequence belongs to the protein kinase superfamily. Ser/Thr protein kinase family. In terms of assembly, component of the Dbf4-dependent kinase (DDK) complex consisting of Cdc7 and the Dbf4 ortholog chif. Interacts with chif (via the processed polypeptide Chiffon-A); the interaction is direct.

It catalyses the reaction L-seryl-[protein] + ATP = O-phospho-L-seryl-[protein] + ADP + H(+). The enzyme catalyses L-threonyl-[protein] + ATP = O-phospho-L-threonyl-[protein] + ADP + H(+). With respect to regulation, activated by chif. Inhibited by the synthetic compound XL413. Its function is as follows. Catalytic component of the Dbf4-dependent kinase (DDK) complex. Phosphorylates components of the pre-replication complex, including Mcm2 and, to a lesser extent, Mcm4. Phosphorylates histones, including H3 and H2B. Required for DNA replication and mitotic proliferation, including during the endoreplication and amplification stages of DNA replication in egg chamber follicle cells of the ovary. This is non-specific serine/threonine protein kinase Cdc7 from Drosophila melanogaster (Fruit fly).